The sequence spans 210 residues: Probable GTP-binding protein EngB (210 aa).

The region spanning 24–199 (QGCEVAFAGR…WEVLGRWLDL (176 aa)) is the EngB-type G domain. GTP-binding positions include 32 to 39 (GRSNAGKS), 59 to 63 (GRTRM), 77 to 80 (DLPG), 144 to 147 (TKSD), and 178 to 180 (FSS). Mg(2+)-binding residues include Ser39 and Thr61.

The protein belongs to the TRAFAC class TrmE-Era-EngA-EngB-Septin-like GTPase superfamily. EngB GTPase family. The cofactor is Mg(2+).

In terms of biological role, necessary for normal cell division and for the maintenance of normal septation. The protein is Probable GTP-binding protein EngB of Methylococcus capsulatus (strain ATCC 33009 / NCIMB 11132 / Bath).